The sequence spans 79 residues: MLVLTRKMGEVVTIGDSIRIKVVEMKGNQVRLGIEAPNDMRIYREEIYIKVQRENQIAASWSLADLEKAVTCLGADGKE.

This sequence belongs to the CsrA/RsmA family. Homodimer; the beta-strands of each monomer intercalate to form a hydrophobic core, while the alpha-helices form wings that extend away from the core.

Its subcellular location is the cytoplasm. Functionally, a translational regulator that binds mRNA to regulate translation initiation and/or mRNA stability. Usually binds in the 5'-UTR at or near the Shine-Dalgarno sequence preventing ribosome-binding, thus repressing translation. Its main target seems to be the major flagellin gene, while its function is anatagonized by FliW. The sequence is that of Translational regulator CsrA from Geobacter sulfurreducens (strain ATCC 51573 / DSM 12127 / PCA).